The chain runs to 739 residues: Phosphoribosylformylglycinamidine synthase subunit PurL (739 aa).

Residue His-54 is part of the active site. ATP-binding residues include Tyr-57 and Lys-96. Glu-98 contacts Mg(2+). Substrate contacts are provided by residues 99–102 (SHNH) and Arg-121. Residue His-100 is the Proton acceptor of the active site. Asp-122 is a binding site for Mg(2+). Residue Gln-245 coordinates substrate. Asp-273 is a binding site for Mg(2+). 317–319 (ESQ) contributes to the substrate binding site. ATP contacts are provided by Asp-500 and Gly-537. Asn-538 contributes to the Mg(2+) binding site. Ser-540 provides a ligand contact to substrate.

Belongs to the FGAMS family. In terms of assembly, monomer. Part of the FGAM synthase complex composed of 1 PurL, 1 PurQ and 2 PurS subunits.

Its subcellular location is the cytoplasm. It carries out the reaction N(2)-formyl-N(1)-(5-phospho-beta-D-ribosyl)glycinamide + L-glutamine + ATP + H2O = 2-formamido-N(1)-(5-O-phospho-beta-D-ribosyl)acetamidine + L-glutamate + ADP + phosphate + H(+). It functions in the pathway purine metabolism; IMP biosynthesis via de novo pathway; 5-amino-1-(5-phospho-D-ribosyl)imidazole from N(2)-formyl-N(1)-(5-phospho-D-ribosyl)glycinamide: step 1/2. Part of the phosphoribosylformylglycinamidine synthase complex involved in the purines biosynthetic pathway. Catalyzes the ATP-dependent conversion of formylglycinamide ribonucleotide (FGAR) and glutamine to yield formylglycinamidine ribonucleotide (FGAM) and glutamate. The FGAM synthase complex is composed of three subunits. PurQ produces an ammonia molecule by converting glutamine to glutamate. PurL transfers the ammonia molecule to FGAR to form FGAM in an ATP-dependent manner. PurS interacts with PurQ and PurL and is thought to assist in the transfer of the ammonia molecule from PurQ to PurL. The protein is Phosphoribosylformylglycinamidine synthase subunit PurL of Exiguobacterium sp. (strain ATCC BAA-1283 / AT1b).